A 340-amino-acid polypeptide reads, in one-letter code: Phosphate acyltransferase (340 aa).

It belongs to the PlsX family. As to quaternary structure, homodimer. Probably interacts with PlsY.

It is found in the cytoplasm. The enzyme catalyses a fatty acyl-[ACP] + phosphate = an acyl phosphate + holo-[ACP]. Its pathway is lipid metabolism; phospholipid metabolism. Its function is as follows. Catalyzes the reversible formation of acyl-phosphate (acyl-PO(4)) from acyl-[acyl-carrier-protein] (acyl-ACP). This enzyme utilizes acyl-ACP as fatty acyl donor, but not acyl-CoA. The polypeptide is Phosphate acyltransferase (Trichodesmium erythraeum (strain IMS101)).